We begin with the raw amino-acid sequence, 474 residues long: Microtubule protein alp7 (474 aa).

The span at 1 to 20 (MSDIVSSSTDYSRRSPSSSS) shows a compositional bias: low complexity. 3 disordered regions span residues 1–79 (MSDI…DTLN), 93–114 (KSFD…LSQH), and 164–223 (SLQT…NSTQ). A Phosphoserine modification is found at Ser17. The segment covering 25–36 (ETDHTGFHEKRQ) has biased composition (basic and acidic residues). Over residues 66–76 (SKPNPQLNLKD) the composition is skewed to polar residues. Composition is skewed to polar residues over residues 177 to 189 (SNGS…NTAP) and 201 to 223 (RNSA…NSTQ). 2 coiled-coil regions span residues 219 to 273 (INST…QLRS) and 367 to 471 (KISN…LNLE).

Interacts with alp14.

The protein resides in the nucleus. The protein localises to the cytoplasm. It is found in the cytoskeleton. Its subcellular location is the spindle. It localises to the chromosome. The protein resides in the centromere. The protein localises to the kinetochore. Functionally, required for bipolar spindle formation and proper chromosome segregation. Has an indirect role in connecting the kinetochores and the plus end of pole to chromosome microtubules by targeting alp14 to the spindle pole body. Involved in the emergence of large microtubule organizing centers (MTOC) in interphase cells. Attaches to the minus ends of microtubules and associates with the sites of microtubule attachment on the nuclear envelope. This leads to the stabilization of the microtubule bundles. In Schizosaccharomyces pombe (strain 972 / ATCC 24843) (Fission yeast), this protein is Microtubule protein alp7 (alp7).